A 150-amino-acid polypeptide reads, in one-letter code: Large ribosomal subunit protein uL15 (150 aa).

The segment at 1–57 (MTLRLESLKPNKGARRRKLRKGRGIAAGQGASCGFGMRGQKSRSGRPTRPGFEGGQM) is disordered. A compositionally biased stretch (basic residues) spans 12-23 (KGARRRKLRKGR). Residues 25–37 (IAAGQGASCGFGM) are compositionally biased toward gly residues.

This sequence belongs to the universal ribosomal protein uL15 family. Part of the 50S ribosomal subunit.

Functionally, binds to the 23S rRNA. This chain is Large ribosomal subunit protein uL15, found in Synechococcus sp. (strain CC9311).